Here is a 127-residue protein sequence, read N- to C-terminus: Aspartate 1-decarboxylase (127 aa).

Catalysis depends on S25, which acts as the Schiff-base intermediate with substrate; via pyruvic acid. Position 25 is a pyruvic acid (Ser) (S25). T57 serves as a coordination point for substrate. Y58 functions as the Proton donor in the catalytic mechanism. 73 to 75 (GAA) is a binding site for substrate.

The protein belongs to the PanD family. In terms of assembly, heterooctamer of four alpha and four beta subunits. The cofactor is pyruvate. Post-translationally, is synthesized initially as an inactive proenzyme, which is activated by self-cleavage at a specific serine bond to produce a beta-subunit with a hydroxyl group at its C-terminus and an alpha-subunit with a pyruvoyl group at its N-terminus.

It is found in the cytoplasm. It carries out the reaction L-aspartate + H(+) = beta-alanine + CO2. It functions in the pathway cofactor biosynthesis; (R)-pantothenate biosynthesis; beta-alanine from L-aspartate: step 1/1. In terms of biological role, catalyzes the pyruvoyl-dependent decarboxylation of aspartate to produce beta-alanine. The polypeptide is Aspartate 1-decarboxylase (Trichormus variabilis (strain ATCC 29413 / PCC 7937) (Anabaena variabilis)).